The primary structure comprises 189 residues: Peptidyl-tRNA hydrolase (189 aa).

Tyr14 provides a ligand contact to tRNA. The active-site Proton acceptor is the His19. The tRNA site is built by Phe64, Asn66, and Asn112.

The protein belongs to the PTH family. As to quaternary structure, monomer.

It is found in the cytoplasm. It catalyses the reaction an N-acyl-L-alpha-aminoacyl-tRNA + H2O = an N-acyl-L-amino acid + a tRNA + H(+). Functionally, hydrolyzes ribosome-free peptidyl-tRNAs (with 1 or more amino acids incorporated), which drop off the ribosome during protein synthesis, or as a result of ribosome stalling. Catalyzes the release of premature peptidyl moieties from peptidyl-tRNA molecules trapped in stalled 50S ribosomal subunits, and thus maintains levels of free tRNAs and 50S ribosomes. This Sphingopyxis alaskensis (strain DSM 13593 / LMG 18877 / RB2256) (Sphingomonas alaskensis) protein is Peptidyl-tRNA hydrolase.